Reading from the N-terminus, the 162-residue chain is NADH-quinone oxidoreductase subunit I (162 aa).

2 4Fe-4S ferredoxin-type domains span residues 52 to 82 and 93 to 122; these read LRRY…IEAG and TRYD…EGPN. Cys-62, Cys-65, Cys-68, Cys-72, Cys-102, Cys-105, Cys-108, and Cys-112 together coordinate [4Fe-4S] cluster.

Belongs to the complex I 23 kDa subunit family. In terms of assembly, NDH-1 is composed of 14 different subunits. Subunits NuoA, H, J, K, L, M, N constitute the membrane sector of the complex. It depends on [4Fe-4S] cluster as a cofactor.

The protein localises to the cell inner membrane. The catalysed reaction is a quinone + NADH + 5 H(+)(in) = a quinol + NAD(+) + 4 H(+)(out). Functionally, NDH-1 shuttles electrons from NADH, via FMN and iron-sulfur (Fe-S) centers, to quinones in the respiratory chain. The immediate electron acceptor for the enzyme in this species is believed to be ubiquinone. Couples the redox reaction to proton translocation (for every two electrons transferred, four hydrogen ions are translocated across the cytoplasmic membrane), and thus conserves the redox energy in a proton gradient. In Azorhizobium caulinodans (strain ATCC 43989 / DSM 5975 / JCM 20966 / LMG 6465 / NBRC 14845 / NCIMB 13405 / ORS 571), this protein is NADH-quinone oxidoreductase subunit I.